The primary structure comprises 890 residues: Nitrate reductase [NADH] 2 (890 aa).

Cysteine 165 is a binding site for Mo-molybdopterin. The Cytochrome b5 heme-binding domain maps to 513 to 588; sequence SKMFSVSEVK…LEDYRIGELI (76 aa). Heme is bound by residues histidine 548 and histidine 571. An FAD-binding FR-type domain is found at 634–746; the sequence is RQKIPCKLVS…KGPLGHIEYT (113 aa). Residues 686-689, 703-707, phenylalanine 708, phenylalanine 715, 720-722, and threonine 773 contribute to the FAD site; these read RAYT, LIKVY, and LMS.

Belongs to the nitrate reductase family. In terms of assembly, homodimer. FAD is required as a cofactor. Requires heme as cofactor. It depends on Mo-molybdopterin as a cofactor.

It carries out the reaction nitrite + NAD(+) + H2O = nitrate + NADH + H(+). Nitrate reductase is a key enzyme involved in the first step of nitrate assimilation in plants, fungi and bacteria. This is Nitrate reductase [NADH] 2 (NIA2) from Phaseolus vulgaris (Kidney bean).